The chain runs to 277 residues: Small ribosomal subunit protein uS2 (277 aa).

Basic and acidic residues predominate over residues 228–241 (YEERLQAETDKDAE). Residues 228 to 277 (YEERLQAETDKDAESSTVQQEENPEADIPESIETKESVSAAADSDLDENE) are disordered.

Belongs to the universal ribosomal protein uS2 family.

This chain is Small ribosomal subunit protein uS2, found in Syntrophus aciditrophicus (strain SB).